The following is a 118-amino-acid chain: Non-specific lipid-transfer protein 2 (118 aa).

The N-terminal stretch at 1–25 (MARGMKLACVVLVICMVVIAPMAEG) is a signal peptide. 4 disulfides stabilise this stretch: Cys29/Cys76, Cys39/Cys53, Cys54/Cys99, and Cys74/Cys113.

This sequence belongs to the plant LTP family.

Plant non-specific lipid-transfer proteins transfer phospholipids as well as galactolipids across membranes. May play a role in wax or cutin deposition in the cell walls of expanding epidermal cells and certain secretory tissues. Binds saturated fatty acids, jasmonic acid and, with highest efficiency, unsaturated fatty acids and lysolipids. The sequence is that of Non-specific lipid-transfer protein 2 from Lens culinaris (Lentil).